Reading from the N-terminus, the 235-residue chain is Orotidine 5'-phosphate decarboxylase (235 aa).

Residues Asp-10, Lys-32, 59–68 (DLKLHDIPNT), Thr-123, Arg-184, Gln-193, Gly-213, and Arg-214 each bind substrate. Residue Lys-61 is the Proton donor of the active site.

It belongs to the OMP decarboxylase family. Type 1 subfamily. Homodimer.

The catalysed reaction is orotidine 5'-phosphate + H(+) = UMP + CO2. The protein operates within pyrimidine metabolism; UMP biosynthesis via de novo pathway; UMP from orotate: step 2/2. Its function is as follows. Catalyzes the decarboxylation of orotidine 5'-monophosphate (OMP) to uridine 5'-monophosphate (UMP). The chain is Orotidine 5'-phosphate decarboxylase from Paramagnetospirillum magneticum (strain ATCC 700264 / AMB-1) (Magnetospirillum magneticum).